We begin with the raw amino-acid sequence, 92 residues long: Small ribosomal subunit protein uS19 (92 aa).

The protein belongs to the universal ribosomal protein uS19 family.

Its function is as follows. Protein S19 forms a complex with S13 that binds strongly to the 16S ribosomal RNA. In Bifidobacterium animalis subsp. lactis (strain AD011), this protein is Small ribosomal subunit protein uS19.